Consider the following 108-residue polypeptide: ADM5 (108 aa).

A signal peptide spans 1-18 (MTAHILLLWLFASSILGD). The propeptide occupies 19-25 (PDSAGRL). Residues C38 and C43 are joined by a disulfide bond. The tract at residues 61-108 (KELSGKAGRKPQDPYSYGRRRRRRRRRREARLLRRLQDPSLRRAQLAG) is disordered. Tyrosine amide is present on Y77. Residues 78-89 (GRRRRRRRRRRE) are compositionally biased toward basic residues. A propeptide spanning residues 89–108 (EARLLRRLQDPSLRRAQLAG) is cleaved from the precursor. A compositionally biased stretch (basic and acidic residues) spans 90-101 (ARLLRRLQDPSL).

This sequence belongs to the adrenomedullin family. As to expression, expressed abundantly in the spleen and thymus. Also expressed in adrenal and pituitary. Not expressed in brain, heart, kidney, liver and stomach.

It is found in the secreted. Functionally, seems to have a peripheral vasodepressor effect and a central vasopressor effect. The chain is ADM5 (ADM5) from Sus scrofa (Pig).